The primary structure comprises 149 residues: Nucleoside deoxyribosyltransferase (149 aa).

E90 (nucleophile) is an active-site residue.

This sequence belongs to the nucleoside deoxyribosyltransferase family.

It carries out the reaction 2-deoxy-D-ribosyl-base(1) + base(2) = 2-deoxy-D-ribosyl-base(2) + base(1).. Its pathway is nucleotide metabolism; nucleotide salvage pathway. Its function is as follows. Catalyzes the cleavage of the glycosidic bond of 2'-deoxyribonucleosides and the transfer of the deoxyribosyl moiety to an acceptor purine or pyrimidine base. In Lactobacillus johnsonii (strain CNCM I-12250 / La1 / NCC 533), this protein is Nucleoside deoxyribosyltransferase (ntd).